Consider the following 546-residue polypeptide: CTP synthase (546 aa).

The tract at residues 1–269 is amidoligase domain; the sequence is MNPNTKIIFV…DAKLVELLNL (269 aa). Ser16 lines the CTP pocket. Residue Ser16 coordinates UTP. Residues 17–22 and Asp74 contribute to the ATP site; that span reads SLGKGV. Positions 74 and 143 each coordinate Mg(2+). CTP is bound by residues 150–152, 190–195, and Lys226; these read DIE and KTKPTQ. UTP contacts are provided by residues 190 to 195 and Lys226; that span reads KTKPTQ. The Glutamine amidotransferase type-1 domain maps to 294-546; sequence TIAMVGKYVS…IHAAVEKSNK (253 aa). Gly356 contacts L-glutamine. Catalysis depends on Cys383, which acts as the Nucleophile; for glutamine hydrolysis. Residues 384–387, Glu407, and Arg474 contribute to the L-glutamine site; that span reads LGMQ. Active-site residues include His519 and Glu521.

The protein belongs to the CTP synthase family. In terms of assembly, homotetramer.

It carries out the reaction UTP + L-glutamine + ATP + H2O = CTP + L-glutamate + ADP + phosphate + 2 H(+). The enzyme catalyses L-glutamine + H2O = L-glutamate + NH4(+). The catalysed reaction is UTP + NH4(+) + ATP = CTP + ADP + phosphate + 2 H(+). The protein operates within pyrimidine metabolism; CTP biosynthesis via de novo pathway; CTP from UDP: step 2/2. With respect to regulation, allosterically activated by GTP, when glutamine is the substrate; GTP has no effect on the reaction when ammonia is the substrate. The allosteric effector GTP functions by stabilizing the protein conformation that binds the tetrahedral intermediate(s) formed during glutamine hydrolysis. Inhibited by the product CTP, via allosteric rather than competitive inhibition. In terms of biological role, catalyzes the ATP-dependent amination of UTP to CTP with either L-glutamine or ammonia as the source of nitrogen. Regulates intracellular CTP levels through interactions with the four ribonucleotide triphosphates. The chain is CTP synthase from Francisella philomiragia subsp. philomiragia (strain ATCC 25017 / CCUG 19701 / FSC 153 / O#319-036).